The primary structure comprises 310 residues: p-hydroxybenzoic acid efflux pump subunit AaeA (310 aa).

The helical transmembrane segment at Ala12–Tyr32 threads the bilayer.

It belongs to the membrane fusion protein (MFP) (TC 8.A.1) family.

The protein localises to the cell inner membrane. Its function is as follows. Forms an efflux pump with AaeB. This is p-hydroxybenzoic acid efflux pump subunit AaeA from Escherichia coli O17:K52:H18 (strain UMN026 / ExPEC).